A 602-amino-acid chain; its full sequence is NAD-reducing hydrogenase HoxS subunit alpha (602 aa).

219 to 228 (GRGGAGFSTG) provides a ligand contact to NAD(+). 332 to 379 (GAGAYICGDESALIESCEGKRGTPRVKPPFPVQQGYLGKPTSVNNVET) is an FMN binding site. Residues cysteine 499, cysteine 502, cysteine 505, and cysteine 545 each coordinate [4Fe-4S] cluster.

The protein belongs to the complex I 51 kDa subunit family. In terms of assembly, tetramer of an alpha and a gamma subunits (flavin-containing dimer), and a delta and a nickel-containing beta subunit (hydrogenase dimer). The cofactor is FMN. [4Fe-4S] cluster is required as a cofactor.

Its subcellular location is the cytoplasm. The enzyme catalyses H2 + NAD(+) = NADH + H(+). Functionally, subunits alpha and gamma of HoxS constitute an NADH--oxidoreductase. This is NAD-reducing hydrogenase HoxS subunit alpha (hoxF) from Cupriavidus necator (strain ATCC 17699 / DSM 428 / KCTC 22496 / NCIMB 10442 / H16 / Stanier 337) (Ralstonia eutropha).